Reading from the N-terminus, the 574-residue chain is MRTSQYLLSTLKEVPADAEVVSHQLMLRAGMIRKLASGLYSWLPTGLRVLRKVENIVREEMDNAGAIEVSMPVVQPADLWQESGRWVQYGPELLRFTDRGARAFVLGPTHEEVITDLIRNEVSSYKQLPLNFYQIQTKFRDEVRPRFGVMRSREFVMKDAYSFHTSQASLQATYDAMYQAYSAIFTRMGLEFRAVQADTGSIGGSASHEFQVLAGSGEDDIVFSTASDYAANIELAEAVAPAAARAAPGEDMRLVNTPDARTIAELVAQFSLPVEKTVKTLLVRAREDAGHPLVALMVRGDHHLNDVKAEKLPQVAAPLTFASEEEIRLAVGAGPGSLGPVNLPLPLVIDRSVAVMSDFAAGANAEGKHFFGINWERDLPLPQVADLRKVVEGDISPDGNGTLQIKRGIEVGHIFQLGTKYSEAMKATVQGEDGRNQTLTMGCYGIGITRVVVAAIEQNHDDRGILWPETLAPFNVAILPMNMHKSFRVKEVAEDLYQQLQARGIDVLLDDRKERPGVMFADMELIGVPHQLVIGDRNLDTEEIEYKNRRSGEKRMIKLSAIVDFLVSEIATAK.

It belongs to the class-II aminoacyl-tRNA synthetase family. ProS type 1 subfamily. As to quaternary structure, homodimer.

The protein resides in the cytoplasm. It catalyses the reaction tRNA(Pro) + L-proline + ATP = L-prolyl-tRNA(Pro) + AMP + diphosphate. Functionally, catalyzes the attachment of proline to tRNA(Pro) in a two-step reaction: proline is first activated by ATP to form Pro-AMP and then transferred to the acceptor end of tRNA(Pro). As ProRS can inadvertently accommodate and process non-cognate amino acids such as alanine and cysteine, to avoid such errors it has two additional distinct editing activities against alanine. One activity is designated as 'pretransfer' editing and involves the tRNA(Pro)-independent hydrolysis of activated Ala-AMP. The other activity is designated 'posttransfer' editing and involves deacylation of mischarged Ala-tRNA(Pro). The misacylated Cys-tRNA(Pro) is not edited by ProRS. In Sodalis glossinidius (strain morsitans), this protein is Proline--tRNA ligase.